Here is a 179-residue protein sequence, read N- to C-terminus: Transcription termination/antitermination protein NusG (179 aa).

A KOW domain is found at 130–157; it reads EGDVVQIIDGAFMGQEGRVVEIENNKVK.

This sequence belongs to the NusG family.

Participates in transcription elongation, termination and antitermination. This is Transcription termination/antitermination protein NusG from Streptococcus pyogenes serotype M1.